The sequence spans 340 residues: N(4)-(Beta-N-acetylglucosaminyl)-L-asparaginase (340 aa).

The N-terminal stretch at 1–45 (MRIIYKQQTMNNNRRDFIKKLGIATAAIAINPLEAKNLLDTSEPK) is a signal peptide. T197 functions as the Nucleophile in the catalytic mechanism. Residues 225–228 (RVGD) and 248–251 (TGHG) each bind substrate.

This sequence belongs to the Ntn-hydrolase family. Heterotetramer of two alpha and two beta chains arranged as a dimer of alpha/beta heterodimers. Post-translationally, cleaved into an alpha and beta chain by autocatalysis; this activates the enzyme. The N-terminal residue of the beta subunit is responsible for the nucleophile hydrolase activity.

It is found in the periplasm. The enzyme catalyses N(4)-(beta-N-acetyl-D-glucosaminyl)-L-asparagine + H2O = N-acetyl-beta-D-glucosaminylamine + L-aspartate + H(+). In terms of biological role, cleaves the GlcNAc-Asn bond which joins oligosaccharides to the peptide of asparagine-linked glycoproteins. Requires that the glycosylated asparagine moiety is not substituted on its N-(R1) and C- (R2) terminus. This is N(4)-(Beta-N-acetylglucosaminyl)-L-asparaginase from Elizabethkingia miricola (Chryseobacterium miricola).